The sequence spans 295 residues: Small ribosomal subunit biogenesis GTPase RsgA (295 aa).

The CP-type G domain occupies 68–228; that stretch reads KNLLTKPHVA…VVDTPGFANL (161 aa). GTP-binding positions include 117 to 120 and 170 to 178; these read NKMD and GLSGVGKSS. Zn(2+) contacts are provided by C250, C255, H257, and C263.

The protein belongs to the TRAFAC class YlqF/YawG GTPase family. RsgA subfamily. Monomer. Associates with 30S ribosomal subunit, binds 16S rRNA. Requires Zn(2+) as cofactor.

It is found in the cytoplasm. One of several proteins that assist in the late maturation steps of the functional core of the 30S ribosomal subunit. Helps release RbfA from mature subunits. May play a role in the assembly of ribosomal proteins into the subunit. Circularly permuted GTPase that catalyzes slow GTP hydrolysis, GTPase activity is stimulated by the 30S ribosomal subunit. This is Small ribosomal subunit biogenesis GTPase RsgA from Thermotoga petrophila (strain ATCC BAA-488 / DSM 13995 / JCM 10881 / RKU-1).